A 268-amino-acid polypeptide reads, in one-letter code: Tryptophan synthase alpha chain (268 aa).

Active-site proton acceptor residues include E49 and D60.

Belongs to the TrpA family. As to quaternary structure, tetramer of two alpha and two beta chains.

The enzyme catalyses (1S,2R)-1-C-(indol-3-yl)glycerol 3-phosphate + L-serine = D-glyceraldehyde 3-phosphate + L-tryptophan + H2O. It participates in amino-acid biosynthesis; L-tryptophan biosynthesis; L-tryptophan from chorismate: step 5/5. The alpha subunit is responsible for the aldol cleavage of indoleglycerol phosphate to indole and glyceraldehyde 3-phosphate. The polypeptide is Tryptophan synthase alpha chain (Haemophilus influenzae (strain ATCC 51907 / DSM 11121 / KW20 / Rd)).